The chain runs to 253 residues: Chromosome-partitioning ATPase Soj (253 aa).

The ATP site is built by Lys11, Gly12, Gly13, Val14, Gly15, Lys16, Thr17, Thr18, Pro211, and Asn213. Thr17 serves as a coordination point for Mg(2+).

It belongs to the ParA family.

It carries out the reaction ATP + H2O = ADP + phosphate + H(+). Its function is as follows. ATPase probably involved in chromosome partitioning. Cooperatively binds dsDNA, forming nucleoprotein filaments in a strictly ATP-dependent fashion. This chain is Chromosome-partitioning ATPase Soj, found in Treponema pallidum (strain Nichols).